The primary structure comprises 1062 residues: Inactive tyrosine-protein kinase 7 (1062 aa).

A signal peptide spans 1-22 (MGARPLTLLRALLLPLLAGAQA). Ig-like C2-type domains follow at residues 23 to 112 (AIVF…ASFN), 120 to 210 (PVVL…FTLS), 217 to 309 (ARVV…EATL), 301 to 399 (PPIV…VNIT), 404 to 489 (PTWL…ARVQ), 495 to 578 (KFTP…HVQL), and 570 to 672 (GQIR…APLL). Topologically, residues 23-696 (AIVFIKEPSS…SPPPYKMIQT (674 aa)) are extracellular. A disulfide bridge connects residues Cys45 and Cys93. Asn98, Asn108, Asn176, Asn206, Asn260, and Asn275 each carry an N-linked (GlcNAc...) asparagine glycan. A disulfide bridge connects residues Cys142 and Cys192. 2 disulfides stabilise this stretch: Cys238/Cys293 and Cys335/Cys383. N-linked (GlcNAc...) asparagine glycosylation is found at Asn397, Asn455, Asn559, and Asn638. 3 disulfide bridges follow: Cys425–Cys473, Cys516–Cys562, and Cys605–Cys656. The chain crosses the membrane as a helical span at residues 697-717 (IGLSVGAAVAYIIAVLGLMFY). At 718–1062 (CKKRCKAKRL…LGDSPADSKQ (345 aa)) the chain is on the cytoplasmic side. Disordered regions lie at residues 728–750 (QKQP…QNGQ) and 1039–1062 (NPKD…DSKQ). The segment at 786-1062 (ASLQPITTLG…LGDSPADSKQ (277 aa)) is interaction with CTNNB1. The Protein kinase; inactive domain occupies 788–1058 (LQPITTLGKS…IASTLGDSPA (271 aa)). Ser1056 carries the post-translational modification Phosphoserine.

Belongs to the protein kinase superfamily. Tyr protein kinase family. Insulin receptor subfamily. As to quaternary structure, interacts with CTNNB1. In terms of processing, MMP14 cleaves PTK7 between Pro-613 and Leu-614 generating an N-terminal soluble (70 kDa) fragment and a membrane C-terminal (50 kDa) fragment. Proteolysis by MMP14 regulates PTK7 function in non-canonical Wnt signaling pathway. In terms of tissue distribution, expressed at high levels in lung and un-pregnant uterus among adult tissues, and in the tail, limbs, somites, gut and craniofacial regions among embryonic tissues.

It is found in the membrane. It localises to the cell junction. Its function is as follows. Inactive tyrosine kinase involved in Wnt signaling pathway. Component of both the non-canonical (also known as the Wnt/planar cell polarity signaling) and the canonical Wnt signaling pathway. Functions in cell adhesion, cell migration, cell polarity, proliferation, actin cytoskeleton reorganization and apoptosis. Has a role in embryogenesis, epithelial tissue organization and angiogenesis. The chain is Inactive tyrosine-protein kinase 7 (Ptk7) from Mus musculus (Mouse).